The chain runs to 178 residues: MFIDKIKAKANNNEINVIIEIPMNSGPIKYEFDKESGAIFVDRFMQTTMSYPCNYGFIPDTLSNDGDPVDVLVVAHHPVVPGSVIKCRAIGVLMMEDESGLDEKIIAVPTSKLDITFDHIQELDDLCKMLKKRIVHFFEHYKDLEKDKWVKVTGWGNKVKAEDLIKEGIDRNQQKWNN.

Substrate-binding residues include Lys-29, Arg-43, and Tyr-55. Residues Asp-65, Asp-70, and Asp-102 each contribute to the Mg(2+) site. Tyr-141 contributes to the substrate binding site.

The protein belongs to the PPase family. In terms of assembly, homohexamer. It depends on Mg(2+) as a cofactor.

It is found in the cytoplasm. The catalysed reaction is diphosphate + H2O = 2 phosphate + H(+). Functionally, catalyzes the hydrolysis of inorganic pyrophosphate (PPi) forming two phosphate ions. The sequence is that of Inorganic pyrophosphatase from Rickettsia typhi (strain ATCC VR-144 / Wilmington).